The sequence spans 657 residues: Methyl-accepting chemotaxis protein CtpL (657 aa).

Over 1–5 the chain is Cytoplasmic; it reads MRLKQ. The helical transmembrane segment at 6–26 threads the bilayer; it reads LTNLNTLLLLTVCLALGITLW. At 27 to 305 the chain is on the periplasmic side; that stretch reads WSQRAMERPF…ERQRLQGQVR (279 aa). The helical transmembrane segment at 306–326 threads the bilayer; it reads LIQGGMIALILLIALAIDSLQ. The HAMP domain maps to 327 to 380; it reads RRLARVLGQLVPALSAWADGDFSRPISLRTRTEDLRNLEDSLNRLRSFLAELVG. Topologically, residues 327-657 are cytoplasmic; that stretch reads RRLARVLGQL…LRTTVQAFRL (331 aa). The Methyl-accepting transducer domain occupies 385–621; sequence RAEQVAGSSQ…EIRSHSERIH (237 aa).

The protein belongs to the methyl-accepting chemotaxis (MCP) protein family.

It localises to the cell inner membrane. Its function is as follows. Chemotactic-signal transducers respond to changes in the concentration of attractants and repellents in the environment, transduce a signal from the outside to the inside of the cell, and facilitate sensory adaptation through the variation of the level of methylation. Chemoreceptor for inorganic phosphate, which is required for taxis at low concentrations of phosphate. Is also responsible for the positive chemotaxis toward 4-chloroaniline (4CA) and catechol. Does not recognize inorganic phosphate directly, but via a complex between the periplasmic protein PstS and inorganic phosphate. This Pseudomonas aeruginosa (strain ATCC 15692 / DSM 22644 / CIP 104116 / JCM 14847 / LMG 12228 / 1C / PRS 101 / PAO1) protein is Methyl-accepting chemotaxis protein CtpL.